The following is a 620-amino-acid chain: MVTPKFMSDLFEGDHLELAKLTSPNGDNGIKFNEKHVAPRVLSRVFSEDYKRVKRRRRIFDPRGQTIHQWNKIFLVACLISLFVDPLFFYLPIVQDEVCIDIGIAVEVFLIIIRSIADVFYVIHIFMRFHTAYVAPSSRVFGRGELVIDSSKIASRYLHKGFFLDFIAALPLPQVLIWIVIPNLGGSTIANTKNVLRFIIIIQYLPRLFLIFPLSSQIVKATGVVTETAWAGAAYNLMLYMLASHVLGACWYLLSIERQEACWKSVCKLEESSCQFDFFDCNMVKDSLRVSWFVTSNVTNLCSPNSLFYQFGIYGDAVTSKVTTSAFFNKYFFCLWWGLRNLSSLGQGLLTSTFVGEIMFAIVIATLGLVLFALLIGNMQTYLQSTTVRLEEWRVKRTDTEQWMHHRQLPQELRQSVRKYDQYKWIATRGVDEESLLRGLPLDLRRDIKRHLCLELVRRVPLFDAMDERMLDAICERLKPALCTENTYLVREGDPVNEMLFIIRGNLDSYTTDGGRTGFFNSCRIGPGDFCGEELLTWALDPRPTMVIPSSTRTVKAISEVEAFALIAEDLKFVASQFRRLHSKQLRNKLRFHSHQWRTWAACFIQVAWRRTIQEKKGSC.

Helical transmembrane passes span 73-93 (IFLVACLISLFVDPLFFYLPI), 102-122 (IGIAVEVFLIIIRSIADVFYV), 161-181 (GFFLDFIAALPLPQVLIWIVI), 198-218 (FIIIIQYLPRLFLIFPLSSQI), 237-257 (LMLYMLASHVLGACWYLLSIE), and 356-376 (GEIMFAIVIATLGLVLFALLI). 462–559 (LFDAMDERML…SSTRTVKAIS (98 aa)) contacts a nucleoside 3',5'-cyclic phosphate.

Belongs to the cyclic nucleotide-gated cation channel (TC 1.A.1.5) family. In terms of assembly, interacts (via N-terminus) with DMI1 (via c-terminus). The Nod factor has no effect on this interaction, implying that the complex is maintained after activation. Expressed in roots, stems, leaves, flowers and pods.

Its subcellular location is the nucleus membrane. Its function is as follows. Cyclic nucleotide-gated channel involved in the establishment of both rhizobial and mycorrhizal associations. Required for full activation of nuclear-localized Ca(2+) oscillations by Nod and Myc factors. Simultaneous activation of the K(+)-permeable channel DMI1 and the Ca(2+) channel CNGC15 can give rise to sustained Ca(2+) oscillations. May function during fertilization in both female and male gametophytic Ca(2+) signaling. This is Protein CNGC15b from Medicago truncatula (Barrel medic).